The sequence spans 182 residues: CASP-like protein 5A1 (182 aa).

The Cytoplasmic segment spans residues 1–47; it reads MEMASHPAVHPVALPPPYQAVGPPAPPAVRINDFPGSPGTLMGLALR. The helical transmembrane segment at 48–68 threads the bilayer; it reads FAQLGFALTALCIMVSIVGFS. Residues 69 to 72 lie on the Extracellular side of the membrane; it reads SVTA. The helical transmembrane segment at 73–93 threads the bilayer; it reads FCFLVAAMVLQCIWSLCLGVL. Residues 94-117 lie on the Cytoplasmic side of the membrane; the sequence is DCYALLTKRSLRNSLILSFFVVGD. Residues 118–138 form a helical membrane-spanning segment; the sequence is WITSTMTFAGACAAAGITVLI. The Extracellular portion of the chain corresponds to 139-158; it reads DNDLNQCGPNHCNRFEAAAA. Residues 159–179 traverse the membrane as a helical segment; sequence MAFMSWVITTISFFLSFWILV. Over 180 to 182 the chain is Cytoplasmic; the sequence is TCR.

It belongs to the Casparian strip membrane proteins (CASP) family. Homodimer and heterodimers.

The protein localises to the cell membrane. The protein is CASP-like protein 5A1 of Physcomitrium patens (Spreading-leaved earth moss).